Here is a 370-residue protein sequence, read N- to C-terminus: Phospho-2-dehydro-3-deoxyheptonate aldolase, phenylalanine-inhibited (370 aa).

It belongs to the class-I DAHP synthase family.

The catalysed reaction is D-erythrose 4-phosphate + phosphoenolpyruvate + H2O = 7-phospho-2-dehydro-3-deoxy-D-arabino-heptonate + phosphate. It participates in metabolic intermediate biosynthesis; chorismate biosynthesis; chorismate from D-erythrose 4-phosphate and phosphoenolpyruvate: step 1/7. Inhibited by phenyalanine. In terms of biological role, stereospecific condensation of phosphoenolpyruvate (PEP) and D-erythrose-4-phosphate (E4P) giving rise to 3-deoxy-D-arabino-heptulosonate-7-phosphate (DAHP). The chain is Phospho-2-dehydro-3-deoxyheptonate aldolase, phenylalanine-inhibited (ARO3) from Saccharomyces cerevisiae (strain ATCC 204508 / S288c) (Baker's yeast).